Reading from the N-terminus, the 257-residue chain is Glutamate racemase (257 aa).

Residues 12–13 (DS) and 44–45 (YG) each bind substrate. The active-site Proton donor/acceptor is Cys75. 76-77 (NT) contributes to the substrate binding site. The active-site Proton donor/acceptor is the Cys185. 186–187 (TH) provides a ligand contact to substrate.

The protein belongs to the aspartate/glutamate racemases family.

The enzyme catalyses L-glutamate = D-glutamate. Its pathway is cell wall biogenesis; peptidoglycan biosynthesis. In terms of biological role, provides the (R)-glutamate required for cell wall biosynthesis. The sequence is that of Glutamate racemase from Clostridium botulinum (strain Langeland / NCTC 10281 / Type F).